The chain runs to 365 residues: DNA replication and repair protein RecF (365 aa).

Gly-30–Thr-37 is an ATP binding site.

It belongs to the RecF family.

The protein localises to the cytoplasm. The RecF protein is involved in DNA metabolism; it is required for DNA replication and normal SOS inducibility. RecF binds preferentially to single-stranded, linear DNA. It also seems to bind ATP. The sequence is that of DNA replication and repair protein RecF from Geobacter metallireducens (strain ATCC 53774 / DSM 7210 / GS-15).